The following is a 245-amino-acid chain: 1-(5-phosphoribosyl)-5-[(5-phosphoribosylamino)methylideneamino] imidazole-4-carboxamide isomerase (245 aa).

Catalysis depends on aspartate 12, which acts as the Proton acceptor. Aspartate 131 acts as the Proton donor in catalysis.

The protein belongs to the HisA/HisF family.

Its subcellular location is the cytoplasm. It carries out the reaction 1-(5-phospho-beta-D-ribosyl)-5-[(5-phospho-beta-D-ribosylamino)methylideneamino]imidazole-4-carboxamide = 5-[(5-phospho-1-deoxy-D-ribulos-1-ylimino)methylamino]-1-(5-phospho-beta-D-ribosyl)imidazole-4-carboxamide. The protein operates within amino-acid biosynthesis; L-histidine biosynthesis; L-histidine from 5-phospho-alpha-D-ribose 1-diphosphate: step 4/9. This Thermobifida fusca (strain YX) protein is 1-(5-phosphoribosyl)-5-[(5-phosphoribosylamino)methylideneamino] imidazole-4-carboxamide isomerase.